The sequence spans 40 residues: Probable non-specific lipid-transfer protein (40 aa).

This sequence belongs to the plant LTP family. Phosphorylated by Ca(2+)-dependent protein kinase.

Its function is as follows. Plant non-specific lipid-transfer proteins transfer phospholipids as well as galactolipids across membranes. May play a role in wax or cutin deposition in the cell walls of expanding epidermal cells and certain secretory tissues. The sequence is that of Probable non-specific lipid-transfer protein from Triticum aestivum (Wheat).